Reading from the N-terminus, the 234-residue chain is GTP-binding protein ypt4 (234 aa).

16-23 (GPSGTGKS) lines the GTP pocket. The short motif at 39–47 (SHTVGIDFA) is the Effector region element. 68-72 (DTAGQ) contributes to the GTP binding site. S-geranylgeranyl cysteine attachment occurs at residues Cys-233 and Cys-234.

It belongs to the small GTPase superfamily. Rab family.

It is found in the cell membrane. In Schizosaccharomyces pombe (strain 972 / ATCC 24843) (Fission yeast), this protein is GTP-binding protein ypt4 (ypt4).